Consider the following 399-residue polypeptide: Serine palmitoyltransferase (399 aa).

Residues 113–114 (GF), H213, T241, and S243 contribute to the pyridoxal 5'-phosphate site. K244 bears the N6-(pyridoxal phosphate)lysine mark.

The protein belongs to the class-II pyridoxal-phosphate-dependent aminotransferase family. As to quaternary structure, homodimer. Pyridoxal 5'-phosphate is required as a cofactor.

It localises to the cytoplasm. It carries out the reaction L-serine + hexadecanoyl-CoA + H(+) = 3-oxosphinganine + CO2 + CoA. It functions in the pathway lipid metabolism; sphingolipid metabolism. Its function is as follows. Catalyzes the condensation of L-serine with palmitoyl-CoA (hexadecanoyl-CoA) to produce 3-oxosphinganine. This chain is Serine palmitoyltransferase, found in Sphingobacterium spiritivorum (Flavobacterium spiritivorum).